The following is a 205-amino-acid chain: Ribosome maturation factor RimP (205 aa).

The protein belongs to the RimP family.

It is found in the cytoplasm. Its function is as follows. Required for maturation of 30S ribosomal subunits. The polypeptide is Ribosome maturation factor RimP (Sinorhizobium fredii (strain NBRC 101917 / NGR234)).